We begin with the raw amino-acid sequence, 159 residues long: 2-C-methyl-D-erythritol 2,4-cyclodiphosphate synthase (159 aa).

The a divalent metal cation site is built by aspartate 10 and histidine 12. Residues 10–12 and 36–37 contribute to the 4-CDP-2-C-methyl-D-erythritol 2-phosphate site; these read DVH and HS. Histidine 44 contributes to the a divalent metal cation binding site. Residues 58 to 60, 63 to 67, 102 to 108, 134 to 137, phenylalanine 141, and arginine 144 contribute to the 4-CDP-2-C-methyl-D-erythritol 2-phosphate site; these read DIG, FPDTD, AQAPKMA, and TTTE.

Belongs to the IspF family. Homotrimer. A divalent metal cation is required as a cofactor.

It carries out the reaction 4-CDP-2-C-methyl-D-erythritol 2-phosphate = 2-C-methyl-D-erythritol 2,4-cyclic diphosphate + CMP. It functions in the pathway isoprenoid biosynthesis; isopentenyl diphosphate biosynthesis via DXP pathway; isopentenyl diphosphate from 1-deoxy-D-xylulose 5-phosphate: step 4/6. In terms of biological role, involved in the biosynthesis of isopentenyl diphosphate (IPP) and dimethylallyl diphosphate (DMAPP), two major building blocks of isoprenoid compounds. Catalyzes the conversion of 4-diphosphocytidyl-2-C-methyl-D-erythritol 2-phosphate (CDP-ME2P) to 2-C-methyl-D-erythritol 2,4-cyclodiphosphate (ME-CPP) with a corresponding release of cytidine 5-monophosphate (CMP). This chain is 2-C-methyl-D-erythritol 2,4-cyclodiphosphate synthase, found in Shewanella frigidimarina (strain NCIMB 400).